Here is a 465-residue protein sequence, read N- to C-terminus: MTDTSSSQPAKAWSGRFSEPVSDLVKRYTASVSFDQRMAQQDIRGSLAHAKMLARQGIIGATDLADIERGMVQIRGEIERGEFAWNLDDEDVHLNIEKRLTALVGNPGKRLHTGRSRNDQVATDIRLWLRDAIDRILALIGEFQKNLLDVAEANAATPMPGFTHLQVAQPVTFGHHLMAYFEMSRRDAERFTDCRKRVNRLPLGAAALAGTSYPIDREFVARELGFDEVCHNSLDAVSDRDFAIEFCAASALLMTHLSRLSEELILWMSPRVGFIDLADRFCTGSSIMPQKKNPDVPELVRGKTGRVNGSLIALLTLMKGQPLAYNKDNQEDKEPLFDTADTVIDTLRIYADMITGIRVKADAMRDALKQGYATATDLADYLVKKGLPFRDAHEAVALAVRAAEAKGCDLPDFSLDELRAFSPLVGEDVFAVLTVEGSLASRAHVGGTAPEQVRAAITRARGKNA.

It belongs to the lyase 1 family. Argininosuccinate lyase subfamily.

Its subcellular location is the cytoplasm. It catalyses the reaction 2-(N(omega)-L-arginino)succinate = fumarate + L-arginine. It functions in the pathway amino-acid biosynthesis; L-arginine biosynthesis; L-arginine from L-ornithine and carbamoyl phosphate: step 3/3. The sequence is that of Argininosuccinate lyase from Aromatoleum aromaticum (strain DSM 19018 / LMG 30748 / EbN1) (Azoarcus sp. (strain EbN1)).